Here is a 505-residue protein sequence, read N- to C-terminus: Facilitated trehalose transporter Tret1 (505 aa).

Residues 1–46 (MEMEIKDENLRNSVPFVRQLSTDSVKTKTEYDNEDGTPYKSTTQKL) lie on the Cytoplasmic side of the membrane. Residues 47-67 (FLWTQLLAAFAVSVGSMNVGF) form a helical membrane-spanning segment. At 68–91 (SSGYTSPAVLTMNITLDITKEEIT) the chain is on the extracellular side. N80 carries N-linked (GlcNAc...) asparagine glycosylation. The chain crosses the membrane as a helical span at residues 92–112 (WVGGLMPLAALVGGIVGGPLI). The Cytoplasmic portion of the chain corresponds to 113–124 (EYLGRKKTIMGT). The helical transmembrane segment at 125–145 (AVPFTIGWMLIANAINVVMVF) threads the bilayer. Residues 146 to 149 (AGRV) lie on the Extracellular side of the membrane. The helical transmembrane segment at 150–170 (ICGVCVGIVSLAFPVYIGETI) threads the bilayer. The Cytoplasmic portion of the chain corresponds to 171-175 (QPEVR). A helical membrane pass occupies residues 176–196 (GALGLLPTAFGNTGILLAFLV). Over 197-201 (GSYLD) the chain is Extracellular. A helical membrane pass occupies residues 202–222 (WSNLAFFGAAIPVPFFLLMIL). Over 223–286 (TPETPRWYVS…QLFSKRYLPA (64 aa)) the chain is Cytoplasmic. Residues 287 to 307 (VMISLGLMLFQQLTGINAVIF) traverse the membrane as a helical segment. Residues 308–323 (YAASIFQMSGSSVDEN) lie on the Extracellular side of the membrane. The chain crosses the membrane as a helical span at residues 324-344 (LASIIIGVVNFISTFIATMLI). Topologically, residues 345 to 350 (DRLGRK) are cytoplasmic. Residues 351-371 (VLLYISSVAMITTLLALGAYF) traverse the membrane as a helical segment. At 372-390 (YLKQNHIDVTAYGWLPLAC) the chain is on the extracellular side. The helical transmembrane segment at 391–411 (LVIYVLGFSIGFGPIPWLMLG) threads the bilayer. Residues 412-419 (EILPSKIR) are Cytoplasmic-facing. A helical membrane pass occupies residues 420–437 (GTAASLATGFNWTCTFIV). Residues 438–451 (TKTFQNIIDAIYMH) lie on the Extracellular side of the membrane. Residues 452-472 (GTLWLFAVICIGGLLFVIFFV) traverse the membrane as a helical segment. The Cytoplasmic segment spans residues 473-505 (PETKGKSLEEIEMKLTSGSRRVRNISKQPENIC).

The protein belongs to the major facilitator superfamily. Sugar transporter (TC 2.A.1.1) family. Trehalose transporter subfamily. Expressed in many larval tissues at a low level, moderate levels of expression are seen in testis and head and highest expression in muscle.

The protein localises to the cell membrane. Functionally, high-capacity facilitative transporter for trehalose. Does not transport maltose, sucrose or lactose. Mediates the bidirectional transfer of trehalose. Responsible for the transport of trehalose synthesized in the fat body and the incorporation of trehalose into other tissues that require a carbon source, thereby regulating trehalose levels in the hemolymph. In Bombyx mori (Silk moth), this protein is Facilitated trehalose transporter Tret1.